The chain runs to 154 residues: Myoglobin (154 aa).

A Globin domain is found at G2–K148. S4 carries the phosphoserine modification. Residue H65 coordinates nitrite. O2 is bound at residue H65. The residue at position 68 (T68) is a Phosphothreonine. A heme b-binding site is contributed by H94.

This sequence belongs to the globin family. Monomeric.

The protein localises to the cytoplasm. Its subcellular location is the sarcoplasm. It catalyses the reaction Fe(III)-heme b-[protein] + nitric oxide + H2O = Fe(II)-heme b-[protein] + nitrite + 2 H(+). The enzyme catalyses H2O2 + AH2 = A + 2 H2O. In terms of biological role, monomeric heme protein which primary function is to store oxygen and facilitate its diffusion within muscle tissues. Reversibly binds oxygen through a pentacoordinated heme iron and enables its timely and efficient release as needed during periods of heightened demand. Depending on the oxidative conditions of tissues and cells, and in addition to its ability to bind oxygen, it also has a nitrite reductase activity whereby it regulates the production of bioactive nitric oxide. Under stress conditions, like hypoxia and anoxia, it also protects cells against reactive oxygen species thanks to its pseudoperoxidase activity. In Phocoenoides dalli dalli (Dall's porpoise), this protein is Myoglobin (MB).